Here is a 99-residue protein sequence, read N- to C-terminus: Small ribosomal subunit protein uS17 (99 aa).

The protein belongs to the universal ribosomal protein uS17 family. As to quaternary structure, part of the 30S ribosomal subunit.

Its function is as follows. One of the primary rRNA binding proteins, it binds specifically to the 5'-end of 16S ribosomal RNA. The chain is Small ribosomal subunit protein uS17 from Thermosipho melanesiensis (strain DSM 12029 / CIP 104789 / BI429).